A 1450-amino-acid polypeptide reads, in one-letter code: MFSFVDNRLLVLLAACVLLVRALDQEDIESGLCHQEGTTYSDKDVWKPEPCVICVCDNGNIMCDDVTCGDYPVDCPNAEIPFGECCPVCPDGDGTSYSEQTGVEGPKGEVGPKGDRGLPGPPGRDGNPGLPGPPGPPGPPGLGGNFAPQMSYGYDEKSAGISVPGPMGPMGPRGPPGPSGSPGPQGFQGPSGEPGEPGAAGALGPRGLPGPPGKNGDDGESGKPGRPGERGPSGPQGARGLPGTAGLPGMKGHRGFNGLDGAKGDNGPAGPKGEPGNPGENGAPGQAGPRGLPGERGRPGAPGPAGARGNDGSPGAAGPPGPTGPTGPPGFPGAVGAKGDAGPQGSRGSEGPQGARGEPGAPGPAGAAGPSGNPGTDGQPGGKGATGSPGIAGAPGFPGARGAPGPQGPAGAPGPKGNNGEPGAQGNKGEPGAKGEPGPAGVQGPPGPSGEEGKRGSRGEPGPAGPPGPAGERGGPGSRGFPGSDGASGPKGAPGERGSVGPAGPKGSTGESGRPGEPGLPGAKGLTGSPGSPGPDGKTGPAGAAGQDGHPGPPGPSGARGQSGVMGFPGPKGAAGEPGKSGERGVAGPPGATGAPGKDGEAGAQGPPGPSGPSGERGEQGPAGSPGFQGLPGSPGPAGEAGKPGEQGAPGDAGGPGPSGPRGERGFPGERGGQGPAGAQGPRGSPGSPGNDGAKGEAGAAGAPGGRGPPGLQGMPGERGSAGMPGAKGDRGDAGTKGADGAPGKDGARGLTGPIGPPGPSGAPGDKGEGGPSGPAGPTGARGSPGERGEPGAPGPAGICGPPGADGQPGAKGESGDAGPKGDAGAPGPAGPTGAPGPAGNVGAPGPKGTRGAAGPPGATGFPGAAGRLGPPGPSGNAGPPGPPGPGGKEGAKGSRGETGPAGRSGEPGPAGPPGPSGEKGSPGSDGPAGAPGIPGPQGIAGQRGVVGLPGQRGERGFSGLPGPAGEPGKQGPSGPNGERGPPGPSGPPGLGGPPGEPGREGSPGSEGAPGRDGSPGPKGDRGENGPSGPPGAPGAPGAPGPVGPAGKNGDRGETGPAGPAGPAGPSGVRGAPGPAGARGDKGEAGEQGERGMKGHRGFNGMQGPPGPPGSSGEQGAPGPSGPAGPRGPPGSSGSTGKDGVNGLPGPIGPPGPRGRNGDVGPAGPPGPPGPPGPPGPPSGGFDFSFMPQPPEPKSHGDGRYFRADDANVVRDRDLEVDTTLKSLSAQIENIRSPEGTRKNPARTCRDLKMCHSDWKSGDYWIDPNQGCNLDAIKVHCNMETGETCVYPSQASISQKNWYTSKNPREKKHVWFGETMSDGFQFEYGGEGSDPADVNIQLTFLRLMATEASQNITYHCKNSVAYMDQETGNLKKAVLLQGSNEIEIRAEGNSRFTYGVTEDGCTQHTGEWGKTVIEYKTTKTSRLPIIDIAPMDVGTPDQEFGIDIGPVCFL.

Positions 1–22 are cleaved as a signal peptide; that stretch reads MFSFVDNRLLVLLAACVLLVRA. Residues 23 to 148 constitute a propeptide, N-terminal propeptide; sequence LDQEDIESGL…PPGLGGNFAP (126 aa). Positions 31 to 90 constitute a VWFC domain; the sequence is GLCHQEGTTYSDKDVWKPEPCVICVCDNGNIMCDDVTCGDYPVDCPNAEIPFGECCPVCP. A disordered region spans residues 97–1201; it reads YSEQTGVEGP…EPKSHGDGRY (1105 aa). The span at 106–116 shows a compositional bias: basic and acidic residues; it reads PKGEVGPKGDR. Over residues 130-140 the composition is skewed to pro residues; sequence LPGPPGPPGPP. At Gln-149 the chain carries Pyrrolidone carboxylic acid. At Lys-157 the chain carries Allysine. Positions 166 to 181 are enriched in pro residues; it reads PMGPMGPRGPPGPSGS. 4-hydroxyproline is present on residues Pro-176, Pro-182, Pro-194, Pro-197, Pro-212, Pro-227, Pro-242, and Pro-248. Residues 182–206 show a composition bias toward low complexity; that stretch reads PGPQGFQGPSGEPGEPGAAGALGPR. The segment covering 215 to 229 has biased composition (basic and acidic residues); sequence NGDDGESGKPGRPGE. Residue Lys-251 is modified to 5-hydroxylysine; alternate. Lys-251 is a glycosylation site (O-linked (Gal...) hydroxylysine; alternate). Residues 266–292 show a composition bias toward low complexity; sequence NGPAGPKGEPGNPGENGAPGQAGPRGL. 17 positions are modified to 4-hydroxyproline: Pro-275, Pro-278, Pro-284, Pro-293, Pro-299, Pro-314, Pro-320, Pro-329, Pro-332, Pro-359, Pro-362, Pro-374, Pro-380, Pro-389, Pro-395, Pro-398, and Pro-413. The span at 317–331 shows a compositional bias: pro residues; sequence AGPPGPTGPTGPPGF. Positions 352 to 374 are enriched in low complexity; that stretch reads PQGARGEPGAPGPAGAAGPSGNP. Gly residues predominate over residues 378–387; the sequence is GQPGGKGATG. A compositionally biased stretch (low complexity) spans 388–443; the sequence is SPGIAGAPGFPGARGAPGPQGPAGAPGPKGNNGEPGAQGNKGEPGAKGEPGPAGVQ. 5-hydroxylysine is present on Lys-416. 4-hydroxyproline occurs at positions 422, 437, 446, 461, 467, 476, and 482. The span at 471-480 shows a compositional bias: gly residues; the sequence is GERGGPGSRG. Lys-491 is subject to 5-hydroxylysine. A 4-hydroxyproline mark is found at Pro-494, Pro-515, Pro-521, Pro-530, Pro-533, Pro-551, Pro-569, Pro-578, Pro-590, Pro-608, Pro-626, Pro-632, Pro-644, Pro-650, Pro-656, and Pro-668. 2 stretches are compositionally biased toward low complexity: residues 568-578 and 586-596; these read FPGPKGAAGEP and VAGPPGATGAP. Low complexity predominate over residues 637-650; it reads PAGEAGKPGEQGAP. Residues 669–678 show a composition bias toward gly residues; the sequence is GERGGQGPAG. Residues 679–701 show a composition bias toward low complexity; that stretch reads AQGPRGSPGSPGNDGAKGEAGAA. 4-hydroxyproline is present on residues Pro-689, Pro-704, Pro-710, Pro-716, and Pro-725. Residues 702-711 show a composition bias toward gly residues; it reads GAPGGRGPPG. Lys-737 carries the 5-hydroxylysine modification. Pro-743, Pro-758, Pro-764, Pro-785, Pro-791, Pro-794, Pro-803, Pro-809, Pro-827, Pro-836, and Pro-845 each carry 4-hydroxyproline. Low complexity predominate over residues 796–806; that stretch reads PAGICGPPGAD. Residues 817-869 show a composition bias toward low complexity; the sequence is DAGPKGDAGAPGPAGPTGAPGPAGNVGAPGPKGTRGAAGPPGATGFPGAAGRL. Residue Lys-848 is modified to 5-hydroxylysine. Residues Pro-857 and Pro-863 each carry the 4-hydroxyproline modification. A 3-hydroxyproline modification is found at Pro-871. 4-hydroxyproline is present on residues Pro-872, Pro-881, Pro-884, Pro-908, Pro-914, Pro-923, Pro-932, Pro-950, Pro-962, Pro-968, Pro-983, Pro-989, Pro-995, Pro-1004, and Pro-1010. Low complexity predominate over residues 917–943; the sequence is SGEKGSPGSDGPAGAPGIPGPQGIAGQ. The span at 982 to 997 shows a compositional bias: pro residues; it reads PPGPSGPPGLGGPPGE. Lys-1019 is modified (5-hydroxylysine). Positions 1028–1043 are enriched in pro residues; sequence SGPPGAPGAPGAPGPV. Pro-1031, Pro-1034, and Pro-1037 each carry 4-hydroxyproline. Low complexity predominate over residues 1064 to 1078; sequence AGPSGVRGAPGPAGA. The span at 1079 to 1093 shows a compositional bias: basic and acidic residues; it reads RGDKGEAGEQGERGM. Residue Lys-1082 is modified to 5-hydroxylysine. Lys-1094 carries the 5-hydroxylysine; alternate modification. A glycan (O-linked (Gal...) hydroxylysine; alternate) is linked at Lys-1094. 2 positions are modified to 4-hydroxyproline: Pro-1106 and Pro-1109. Pro residues predominate over residues 1120–1129; sequence PSGPAGPRGP. 2 positions are modified to 4-hydroxyproline: Pro-1130 and Pro-1145. Over residues 1130 to 1145 the composition is skewed to low complexity; it reads PGSSGSTGKDGVNGLP. Pro-1150 carries the 3-hydroxyproline modification. Pro-1151 carries the post-translational modification 4-hydroxyproline. Positions 1163 to 1178 are enriched in pro residues; it reads AGPPGPPGPPGPPGPP. Pro-1165 bears the 3-hydroxyproline mark. Pro-1166 is subject to 4-hydroxyproline. The residue at position 1168 (Pro-1168) is a 3-hydroxyproline. Pro-1169 bears the 4-hydroxyproline mark. Pro-1171 carries the post-translational modification 3-hydroxyproline. A 4-hydroxyproline mark is found at Pro-1172, Pro-1175, and Pro-1178. Position 1194 is an allysine (Lys-1194). A propeptide spans 1205–1450 (C-terminal propeptide); the sequence is DDANVVRDRD…GIDIGPVCFL (246 aa). In terms of domain architecture, Fibrillar collagen NC1 spans 1215 to 1450; it reads LEVDTTLKSL…GIDIGPVCFL (236 aa). 3 disulfide bridges follow: Cys-1245/Cys-1277, Cys-1285/Cys-1448, and Cys-1356/Cys-1401. The Ca(2+) site is built by Asp-1263, Asn-1265, Gln-1266, Cys-1268, and Asp-1271. Asn-1351 is a glycosylation site (N-linked (GlcNAc...) asparagine).

Belongs to the fibrillar collagen family. As to quaternary structure, trimers of one alpha 2(I) and two alpha 1(I) chains. Contains mostly 4-hydroxyproline. Proline residues at the third position of the tripeptide repeating unit (G-X-Y) are hydroxylated in some or all of the chains. In terms of processing, contains 3-hydroxyproline at a few sites. This modification occurs on the first proline residue in the sequence motif Gly-Pro-Hyp, where Hyp is 4-hydroxyproline. Post-translationally, lysine residues at the third position of the tripeptide repeating unit (G-X-Y) are 5-hydroxylated in some or all of the chains. O-glycosylated on hydroxylated lysine residues. The O-linked glycan consists of a Glc-Gal disaccharide.

It is found in the secreted. The protein localises to the extracellular space. It localises to the extracellular matrix. Functionally, type I collagen is a member of group I collagen (fibrillar forming collagen). The protein is Collagen alpha-1(I) chain (COL1A1) of Cynops pyrrhogaster (Japanese fire-bellied newt).